Reading from the N-terminus, the 495-residue chain is Sialin (495 aa).

The segment at 1–24 (MKSPVSDLAPSDGEEGSDRTPLLQ) is disordered. The residue at position 3 (serine 3) is a Phosphoserine. A Dileucine internalization motif motif is present at residues 22 to 23 (LL). A helical membrane pass occupies residues 42–62 (LAFLSFFGFFVLYSLRVNLSV). 3 N-linked (GlcNAc...) asparagine glycosylation sites follow: asparagine 71, asparagine 77, and asparagine 95. 11 consecutive transmembrane segments (helical) span residues 110–130 (WILG…GYVA), 137–157 (LLLG…PLAA), 159–179 (FGVG…GVTY), 201–221 (ISYA…GVIC), 228–248 (YVFY…ICLV), 289–309 (LPLW…YTLL), 329–349 (FLSA…GQAA), 366–386 (VFSL…GFIG), 392–412 (AVAF…GFSI), 424–444 (ILLG…PIIA), and 458–478 (TVFC…TLFA).

It belongs to the major facilitator superfamily. Sodium/anion cotransporter family. As to expression, significantly expressed in lung endothelial cells, and much less in liver.

It is found in the basolateral cell membrane. The protein resides in the cytoplasmic vesicle. The protein localises to the secretory vesicle. Its subcellular location is the synaptic vesicle membrane. It localises to the lysosome membrane. It carries out the reaction N-acetylneuraminate(in) + H(+)(in) = N-acetylneuraminate(out) + H(+)(out). The catalysed reaction is D-glucuronate(out) + H(+)(out) = D-glucuronate(in) + H(+)(in). It catalyses the reaction 2 nitrate(out) + H(+)(out) = 2 nitrate(in) + H(+)(in). The enzyme catalyses L-aspartate(out) = L-aspartate(in). It carries out the reaction L-glutamate(out) = L-glutamate(in). The catalysed reaction is N-acetyl-L-aspartyl-L-glutamate(out) = N-acetyl-L-aspartyl-L-glutamate(in). In terms of biological role, multifunctional anion transporter that operates via two distinct transport mechanisms, namely proton-coupled anion cotransport and membrane potential-dependent anion transport. Electroneutral proton-coupled acidic monosaccharide symporter, with a sugar to proton stoichiometry of 1:1. Exports glucuronic acid and free sialic acid derived from sialoglycoconjugate degradation out of lysosomes, driven by outwardly directed lysosomal pH gradient. May regulate lysosome function and metabolism of sialylated conjugates that impact oligodendrocyte lineage differentiation and myelinogenesis in the central nervous system. Electrogenic proton-coupled nitrate symporter that transports nitrate ions across the basolateral membrane of salivary gland acinar cells, with nitrate to proton stoichiometry of 2:1. May contribute to nitrate clearance from serum by salivary glands, where it is further concentrated and secreted in the saliva. Uses membrane potential to drive the uptake of acidic amino acids and peptides into synaptic vesicles. Responsible for synaptic vesicular storage of L-aspartate and L-glutamate in pinealocytes as well as vesicular uptake of N-acetyl-L-aspartyl-L-glutamate neuropeptide, relevant to aspartegic-associated glutamatergic neurotransmission and activation of metabotropic receptors that inhibit subsequent transmitter release. Its function is as follows. Receptor for CM101, a polysaccharide produced by group B Streptococcus with antipathoangiogenic properties. The protein is Sialin (SLC17A5) of Ovis aries (Sheep).